The primary structure comprises 303 residues: Glycine--tRNA ligase alpha subunit (303 aa).

It belongs to the class-II aminoacyl-tRNA synthetase family. In terms of assembly, tetramer of two alpha and two beta subunits.

It localises to the cytoplasm. The catalysed reaction is tRNA(Gly) + glycine + ATP = glycyl-tRNA(Gly) + AMP + diphosphate. The protein is Glycine--tRNA ligase alpha subunit of Salmonella arizonae (strain ATCC BAA-731 / CDC346-86 / RSK2980).